Here is a 215-residue protein sequence, read N- to C-terminus: 3-demethoxyubiquinol 3-hydroxylase (215 aa).

The Fe cation site is built by Glu-64, Glu-94, His-97, Glu-146, Glu-178, and His-181.

Belongs to the COQ7 family. Requires Fe cation as cofactor.

It is found in the cell membrane. The catalysed reaction is a 5-methoxy-2-methyl-3-(all-trans-polyprenyl)benzene-1,4-diol + AH2 + O2 = a 3-demethylubiquinol + A + H2O. It functions in the pathway cofactor biosynthesis; ubiquinone biosynthesis. Functionally, catalyzes the hydroxylation of 2-nonaprenyl-3-methyl-6-methoxy-1,4-benzoquinol during ubiquinone biosynthesis. This is 3-demethoxyubiquinol 3-hydroxylase from Ectopseudomonas mendocina (strain ymp) (Pseudomonas mendocina).